The sequence spans 1092 residues: Neural cell adhesion molecule 1-B (1092 aa).

An N-terminal signal peptide occupies residues 1–19; sequence MLHIKDLIWTLYFIGAAVA. Ig-like C2-type domains follow at residues 20–108, 113–202, 208–295, 303–397, and 400–489; these read LEVN…GTVN, QKLT…KDIQ, PPLI…EAIV, PKMT…FEVQ, and PKIR…FILV. The Extracellular portion of the chain corresponds to 20–705; the sequence is LEVNIVPDQG…ATSASTGLGT (686 aa). Disulfide bonds link Cys-41-Cys-93 and Cys-136-Cys-186. Asn-82 carries an N-linked (GlcNAc...) asparagine glycan. Residues 149–153 and 158–162 contribute to the heparin site; these read RHKGK and KKDVR. An N-linked (GlcNAc...) asparagine glycan is attached at Asn-219. The cysteines at positions 232 and 282 are disulfide-linked. Residues Asn-310, Asn-341, Asn-417, Asn-443, and Asn-472 are each glycosylated (N-linked (GlcNAc...) asparagine). Cysteines 323 and 379 form a disulfide. The cysteines at positions 420 and 473 are disulfide-linked. 2 Fibronectin type-III domains span residues 493–592 and 595–691; these read TPSS…TQPV and EPSA…TAKP. A helical membrane pass occupies residues 706 to 723; that stretch reads GAIVGILIVTFVLLLVVV. Residues 724–1092 lie on the Cytoplasmic side of the membrane; the sequence is DVTCFFLNKC…TQRNVNESKA (369 aa). Basic and acidic residues predominate over residues 754–784; it reads KDIEEGKAAFSKDESKEPIVEVRTEEERTPN. Disordered regions lie at residues 754–1005 and 1024–1092; these read KDIE…GGTF and TPAA…ESKA. Composition is skewed to low complexity over residues 820 to 832 and 839 to 851; these read TTVT…ITET and SPTS…TSST. Polar residues predominate over residues 860 to 871; it reads DSNTVQSVQATP. Residues 917-929 are compositionally biased toward low complexity; that stretch reads PSAATSAAEPPTA. Residues 968-978 are compositionally biased toward polar residues; the sequence is AQPSTVKSPTE. A compositionally biased stretch (basic and acidic residues) spans 1050–1068; the sequence is AKTEKTQVEENSKPEETDV. Over residues 1080–1092 the composition is skewed to polar residues; that stretch reads NEATQRNVNESKA.

Post-translationally, polysialylated by ST8SIA2 and ST8SIA4. Polysialylation modulates cell interactions by confering both attractive and repulsive properties that are highly regulated by ST8SIA2 and ST8SIA4. Polysialylation is formed on a-2,3-linked sialic acid of core glycans.

The protein resides in the cell membrane. This protein is a cell adhesion molecule involved in neuron-neuron adhesion, neurite fasciculation, outgrowth of neurites, etc. This Xenopus laevis (African clawed frog) protein is Neural cell adhesion molecule 1-B.